Consider the following 300-residue polypeptide: Type 1 fimbrin D-mannose specific adhesin (300 aa).

The signal sequence occupies residues 1 to 21; that stretch reads MKRVITLFAVLLMGWSVNAWS.

The protein belongs to the fimbrial protein family.

It is found in the fimbrium. Functionally, involved in regulation of length and mediation of adhesion of type 1 fimbriae (but not necessary for the production of fimbriae). Adhesin responsible for the binding to D-mannose. It is laterally positioned at intervals in the structure of the type 1 fimbriae. In order to integrate FimH in the fimbriae FimF and FimG are needed. The chain is Type 1 fimbrin D-mannose specific adhesin (fimH) from Escherichia coli (strain K12).